Here is a 175-residue protein sequence, read N- to C-terminus: RNA pyrophosphohydrolase (175 aa).

Residues 6–149 enclose the Nudix hydrolase domain; the sequence is GYRPNVGIVI…KRDVYRRVMK (144 aa). The Nudix box motif lies at 38 to 59; it reads GGINPGETAEQAMYRELFEEVG.

This sequence belongs to the Nudix hydrolase family. RppH subfamily. The cofactor is a divalent metal cation.

Accelerates the degradation of transcripts by removing pyrophosphate from the 5'-end of triphosphorylated RNA, leading to a more labile monophosphorylated state that can stimulate subsequent ribonuclease cleavage. This is RNA pyrophosphohydrolase from Erwinia tasmaniensis (strain DSM 17950 / CFBP 7177 / CIP 109463 / NCPPB 4357 / Et1/99).